We begin with the raw amino-acid sequence, 440 residues long: Ultraviolet-B receptor UVR8 (440 aa).

At A2 the chain carries N-acetylalanine. RCC1 repeat units follow at residues 2–31 (AEDM…VALL), 32–84 (SGDI…AYSQ), 86–137 (GMEV…AVTM), 139–189 (GEVQ…AVTE), 190–241 (DGDL…SVSY), 243–293 (GALY…ALTS), 294–345 (DGKL…AVTE), and 347–399 (NNVF…SGKS). The tract at residues 397 to 423 (GKSWVSPAERYAVVPDETGLTDGSSKG) is required for interaction with COP1. Residues 413-440 (ETGLTDGSSKGNGGDISVPQTDVKRVRI) form a disordered region.

As to quaternary structure, homodimer in the absence of UV-B, but absorption of UV-B induces monomerization of UVR8 and interaction with COP1. Interacts with RUP1, RUP2 and histone H2B.

The protein resides in the nucleus. Its subcellular location is the cytoplasm. It is found in the cytosol. Its function is as follows. UV-B specific signaling component that acts as a UV-B photoreceptor and plays a key role in establishing UV-protective responses in plants. Upon UV-B irradiation, UVR8 undergoes an immediate switch from homodimer to monomer, accumulates in the nucleus, interacts with the photomorphogenic repressor COP1 and regulates the expression of the transcription factor HY5 by associating with chromatin (through histone H2B binding) in the HY5 promoter region. UVR8 is involved in controlling aspects of leaf growth and morphogenesis in response to UV-B, is required for normal progression of endocycle and has a regulatory role in stomatal differentiation. Is required for plant circadian clock response to photomorphogenic UV-B light, partly through the transcriptional activation of responsive clock genes. Promotes photosynthetic efficiency at elevated levels of UV-B. Plays a role in mediating the effects of UV-B radiation on pathogen resistance by controlling the expression of the sinapate biosynthetic pathway. The two tryptophans, Trp-285 and Trp-233, serve collectively as the UV-B chromophore. The polypeptide is Ultraviolet-B receptor UVR8 (Arabidopsis thaliana (Mouse-ear cress)).